A 200-amino-acid polypeptide reads, in one-letter code: A-type ATP synthase subunit E (200 aa).

It belongs to the V-ATPase E subunit family. Has multiple subunits with at least A(3), B(3), C, D, E, F, H, I and proteolipid K(x).

Its subcellular location is the cell membrane. Component of the A-type ATP synthase that produces ATP from ADP in the presence of a proton gradient across the membrane. This is A-type ATP synthase subunit E from Aeropyrum pernix (strain ATCC 700893 / DSM 11879 / JCM 9820 / NBRC 100138 / K1).